Reading from the N-terminus, the 447-residue chain is UDP-N-acetylmuramate--L-alanine ligase (447 aa).

Residue 108-114 participates in ATP binding; the sequence is GSHGKTS.

It belongs to the MurCDEF family.

It localises to the cytoplasm. The enzyme catalyses UDP-N-acetyl-alpha-D-muramate + L-alanine + ATP = UDP-N-acetyl-alpha-D-muramoyl-L-alanine + ADP + phosphate + H(+). The protein operates within cell wall biogenesis; peptidoglycan biosynthesis. Functionally, cell wall formation. In Listeria monocytogenes serotype 4b (strain F2365), this protein is UDP-N-acetylmuramate--L-alanine ligase.